We begin with the raw amino-acid sequence, 203 residues long: Suppressor of RNA silencing p3 (203 aa).

It belongs to the tenuiviruses p3 protein family. In terms of assembly, homodimer.

The protein resides in the host cytoplasm. Acts as a suppressor of RNA-mediated gene silencing, also known as post-transcriptional gene silencing (PTGS), presumably through the binding of dsRNA. This is Suppressor of RNA silencing p3 from Oryza sativa (Rice).